The following is a 244-amino-acid chain: Nodulation protein G (244 aa).

Residue 11-35 (VTGASGAIGGAIARVLHAQGAIVGL) coordinates NAD(+). Ser-139 provides a ligand contact to substrate. The active-site Proton acceptor is Tyr-152.

Belongs to the short-chain dehydrogenases/reductases (SDR) family.

Proposed to modify Nod factor fatty acyl chain. The protein is Nodulation protein G (nodG) of Rhizobium meliloti (Ensifer meliloti).